We begin with the raw amino-acid sequence, 479 residues long: Glutamyl-tRNA reductase (479 aa).

Substrate contacts are provided by residues 48–51 (TCNR), Ser-104, 109–111 (ERQ), and Gln-115. Residue Cys-49 is the Nucleophile of the active site. Position 189–194 (189–194 (GAGKMG)) interacts with NADP(+). The interval 417–455 (DAGRSLAEAPDADTPDLGEAPSRCPYMTHDPGGDGTETE) is disordered.

Belongs to the glutamyl-tRNA reductase family. Homodimer.

It carries out the reaction (S)-4-amino-5-oxopentanoate + tRNA(Glu) + NADP(+) = L-glutamyl-tRNA(Glu) + NADPH + H(+). The protein operates within porphyrin-containing compound metabolism; protoporphyrin-IX biosynthesis; 5-aminolevulinate from L-glutamyl-tRNA(Glu): step 1/2. In terms of biological role, catalyzes the NADPH-dependent reduction of glutamyl-tRNA(Glu) to glutamate 1-semialdehyde (GSA). The sequence is that of Glutamyl-tRNA reductase from Salinibacter ruber (strain DSM 13855 / M31).